The following is a 183-amino-acid chain: Large ribosomal subunit protein uL5 (183 aa).

It belongs to the universal ribosomal protein uL5 family. In terms of assembly, part of the 50S ribosomal subunit; part of the 5S rRNA/L5/L18/L25 subcomplex. Contacts the 5S rRNA and the P site tRNA. Forms a bridge to the 30S subunit in the 70S ribosome.

This is one of the proteins that bind and probably mediate the attachment of the 5S RNA into the large ribosomal subunit, where it forms part of the central protuberance. In the 70S ribosome it contacts protein S13 of the 30S subunit (bridge B1b), connecting the 2 subunits; this bridge is implicated in subunit movement. Contacts the P site tRNA; the 5S rRNA and some of its associated proteins might help stabilize positioning of ribosome-bound tRNAs. The sequence is that of Large ribosomal subunit protein uL5 from Pseudothermotoga lettingae (strain ATCC BAA-301 / DSM 14385 / NBRC 107922 / TMO) (Thermotoga lettingae).